The following is a 175-amino-acid chain: Sec-independent protein translocase protein TatB (175 aa).

The helical transmembrane segment at 1-21 (MLDLGLSKMALIGVVALVVLG) threads the bilayer. Positions 94 to 115 (SAVSPGGSAAADAPDGPSAASG) are enriched in low complexity. Disordered stretches follow at residues 94-118 (SAVS…GEPS) and 153-175 (VQSG…ARFL). A compositionally biased stretch (basic residues) spans 160–175 (VARHRPASLRRPARFL).

Belongs to the TatB family. In terms of assembly, the Tat system comprises two distinct complexes: a TatABC complex, containing multiple copies of TatA, TatB and TatC subunits, and a separate TatA complex, containing only TatA subunits. Substrates initially bind to the TatABC complex, which probably triggers association of the separate TatA complex to form the active translocon.

Its subcellular location is the cell inner membrane. Part of the twin-arginine translocation (Tat) system that transports large folded proteins containing a characteristic twin-arginine motif in their signal peptide across membranes. Together with TatC, TatB is part of a receptor directly interacting with Tat signal peptides. TatB may form an oligomeric binding site that transiently accommodates folded Tat precursor proteins before their translocation. The chain is Sec-independent protein translocase protein TatB from Burkholderia pseudomallei (strain 1106a).